The primary structure comprises 130 residues: MKSLGRHLVAEFYECDKEVLDNVQLIEQEMKQAAYESGATIVTSTFHRFLPYGVSGVVVISESHLTIHTWPEYGYAAIDLFTCGEDVDPWKAFEHLKKALKAKRVHVVEHERGRYDEIGIPEDSPHKVTV.

S63 serves as the catalytic Schiff-base intermediate with substrate; via pyruvic acid. S63 is subject to Pyruvic acid (Ser); by autocatalysis. Residue H68 is the Proton acceptor; for processing activity of the active site. Residue C83 is the Proton donor; for catalytic activity of the active site.

The protein belongs to the prokaryotic AdoMetDC family. Type 1 subfamily. In terms of assembly, heterotetramer of two alpha and two beta chains arranged as a dimer of alpha/beta heterodimers. Requires pyruvate as cofactor. In terms of processing, is synthesized initially as an inactive proenzyme. Formation of the active enzyme involves a self-maturation process in which the active site pyruvoyl group is generated from an internal serine residue via an autocatalytic post-translational modification. Two non-identical subunits are generated from the proenzyme in this reaction, and the pyruvate is formed at the N-terminus of the alpha chain, which is derived from the carboxyl end of the proenzyme. The post-translation cleavage follows an unusual pathway, termed non-hydrolytic serinolysis, in which the side chain hydroxyl group of the serine supplies its oxygen atom to form the C-terminus of the beta chain, while the remainder of the serine residue undergoes an oxidative deamination to produce ammonia and the pyruvoyl group blocking the N-terminus of the alpha chain.

The catalysed reaction is S-adenosyl-L-methionine + H(+) = S-adenosyl 3-(methylsulfanyl)propylamine + CO2. It participates in amine and polyamine biosynthesis; S-adenosylmethioninamine biosynthesis; S-adenosylmethioninamine from S-adenosyl-L-methionine: step 1/1. Its function is as follows. Catalyzes the decarboxylation of S-adenosylmethionine to S-adenosylmethioninamine (dcAdoMet), the propylamine donor required for the synthesis of the polyamines spermine and spermidine from the diamine putrescine. The sequence is that of S-adenosylmethionine decarboxylase proenzyme from Thermotoga petrophila (strain ATCC BAA-488 / DSM 13995 / JCM 10881 / RKU-1).